The sequence spans 194 residues: Oligoribonuclease (194 aa).

One can recognise an Exonuclease domain in the interval 11 to 174 (LIWIDLEMTG…SDVRDSIDEL (164 aa)). Residue Y132 is part of the active site.

This sequence belongs to the oligoribonuclease family.

The protein resides in the cytoplasm. Functionally, 3'-to-5' exoribonuclease specific for small oligoribonucleotides. This is Oligoribonuclease from Xanthomonas campestris pv. campestris (strain ATCC 33913 / DSM 3586 / NCPPB 528 / LMG 568 / P 25).